Here is a 1615-residue protein sequence, read N- to C-terminus: Low-density lipoprotein receptor-related protein 5 (1615 aa).

The signal sequence occupies residues 1 to 31 (MEAAPPGPPWPLLLLLLLLLALCGCPAPAAA). Residues 32–288 (SPLLLFANRR…YSPMDIQVLS (257 aa)) form a beta-propeller 1 region. Residues 32–1384 (SPLLLFANRR…PPSDDSPAHS (1353 aa)) lie on the Extracellular side of the membrane. LDL-receptor class B repeat units lie at residues 75–119 (GAVY…DWVG), 120–162 (KKLY…DPAH), 163–206 (GYMY…DLEE), 207–247 (QKLY…TLSG), and 248–290 (DTLY…LSQE). One copy of the YWTD 1 repeat lies at 78–81 (YWTD). Asn93 carries N-linked (GlcNAc...) asparagine glycosylation. Residues 123-126 (YWTD) form a YWTD 2 repeat. N-linked (GlcNAc...) asparagine glycosylation is present at Asn138. The stretch at 166–169 (YWTD) is one YWTD 3 repeat. The stretch at 251–254 (YWTD) is one YWTD 4 repeat. The region spanning 295-337 (FHTRCEEDNGGCSHLCLLSPSEPFYTCACPTGVQLQDNGRTCK) is the EGF-like 1 domain. 3 cysteine pairs are disulfide-bonded: Cys299-Cys310, Cys306-Cys321, and Cys323-Cys336. The interval 341 to 602 (EEVLLLARRT…AVNVAKVVGT (262 aa)) is beta-propeller 2. LDL-receptor class B repeat units lie at residues 385 to 427 (GYVY…DWVA), 428 to 470 (RNLY…HPVM), 471 to 514 (GLMY…DLQE), 515 to 557 (GKLY…LGDF), and 558 to 600 (IYWT…AKVV). 2 YWTD repeats span residues 388–391 (YWTD) and 431–434 (YWTD). N-linked (GlcNAc...) asparagine glycosylation occurs at Asn446. One copy of the YWTD 7 repeat lies at 474-477 (YWTD). Asn499 is a glycosylation site (N-linked (GlcNAc...) asparagine). A YWTD 8 repeat occupies 559-562 (YWTD). Positions 601–641 (GTNPCADRNGGCSHLCFFTPHATRCGCPIGLELLSDMKTCI) constitute an EGF-like 2 domain. 3 cysteine pairs are disulfide-bonded: Cys605–Cys616, Cys612–Cys625, and Cys627–Cys640. The beta-propeller 3 stretch occupies residues 644-903 (EAFLVFTSRA…VFHSSRQDGL (260 aa)). LDL-receptor class B repeat units follow at residues 687–729 (NHIY…DWMG), 730–772 (KNLY…DPTK), 773–815 (GYIY…DYAD), 816–855 (QRLY…TQYS), and 856–898 (DYIY…FHSS). The stretch at 690-693 (YWTD) is one YWTD 9 repeat. Residue Asn705 is glycosylated (N-linked (GlcNAc...) asparagine). YWTD repeat units follow at residues 819–822 (YWTD) and 859–862 (YWTD). N-linked (GlcNAc...) asparagine glycosylation occurs at Asn878. An EGF-like 3 domain is found at 902–942 (GLNDCMHNNGQCGQLCLAIPGGHRCGCASHYTLDPSSRNCS). Intrachain disulfides connect Cys906/Cys917, Cys913/Cys926, and Cys928/Cys941. Residues 945–1212 (TTFLLFSQKS…AVEEVSLEEF (268 aa)) are beta-propeller 4. LDL-receptor class B repeat units lie at residues 989–1035 (KFIY…DIYS), 1036–1078 (RTLF…NAER), 1079–1123 (GYLY…DNTL), 1124–1164 (GKLF…TILG), and 1165–1207 (KHLY…VEEV). One can recognise an EGF-like 4 domain in the interval 1213–1254 (SAHPCARDNGGCSHICIAKGDGTPRCSCPVHLVLLQNLLTCG). 12 disulfides stabilise this stretch: Cys1217-Cys1228, Cys1224-Cys1238, Cys1240-Cys1253, Cys1259-Cys1273, Cys1266-Cys1286, Cys1280-Cys1295, Cys1298-Cys1310, Cys1305-Cys1323, Cys1317-Cys1332, Cys1336-Cys1348, Cys1343-Cys1361, and Cys1355-Cys1370. LDL-receptor class A domains are found at residues 1258–1296 (TCSP…EGCP), 1297–1333 (VCSA…ADCD), and 1335–1371 (ICLP…LMCE). Residues 1385–1407 (SAIGPVIGIILSLFVMGGVYFVC) form a helical membrane-spanning segment. At 1408–1615 (QRVVCQRYAG…PPPSPCTDSS (208 aa)) the chain is on the cytoplasmic side. Residues 1475-1501 (RNHVTGASSSSSSSTKATLYPPILNPP) are disordered. Residues 1500–1506 (PPPSPAT) carry the PPPSP motif A motif. A PPPSP motif B motif is present at residues 1538 to 1545 (PPTTPCST). Residues 1568–1615 (SDSDPYPPPPTPHSQYLSAEDSCPPSPATERSYFHLFPPPPSPCTDSS) form a disordered region. Residues 1574 to 1581 (PPPPTPHS) carry the PPPSP motif C motif. The short motif at 1591-1596 (PPSPAT) is the PPPSP motif D element. Residues 1604-1615 (FPPPPSPCTDSS) are compositionally biased toward pro residues. Residues 1605-1612 (PPPPSPCT) carry the PPPSP motif E motif.

The protein belongs to the LDLR family. As to quaternary structure, homodimer; disulfide-linked. Forms phosphorylated oligomer aggregates on Wnt-signaling. Component of a Wnt-signaling complex that contains a WNT protein, a FZD protein and LRP5 or LRP6. Interacts with FZD8; the interaction is formed on WNT-binding and signaling. Interacts (via the phosphorylated PPPSP motif domains) with AXIN1; the interaction prevents inhibition of beta-catenin phosphorylation and signaling and is enhanced in the presence of GSK3B and WNT1 or WNT3A. Interacts (via beta-propeller regions 3 and 4) with DKK1; the interaction, enhanced by MESD and/or KREMEN, inhibits beta-catenin signaling by preventing GSK3-mediated phosphorylation of the PPPSP motifs and subsequent, AXIN1 binding. Interacts with MESD; the interaction prevents the formation of LRP5 aggregates, targets LRP5 to the plasma membrane and, when complexed with KREMEN2, increases DKK1 binding. Interacts with CSNK1E. Interacts with SOST; the interaction antagonizes canonical Wnt signaling. Interacts with APCDD1. Interacts with CAPRIN2. In terms of processing, phosphorylation of cytoplasmic PPPSP motifs regulates the signal transduction of the Wnt signaling pathway through acting as a docking site for AXIN1. Widely expressed, with the highest level of expression in the liver and in aorta.

It is found in the membrane. The protein resides in the endoplasmic reticulum. Acts as a coreceptor with members of the frizzled family of seven-transmembrane spanning receptors to transduce signal by Wnt proteins. Activates the canonical Wnt signaling pathway that controls cell fate determination and self-renewal during embryonic development and adult tissue regeneration. In particular, may play an important role in the development of the posterior patterning of the epiblast during gastrulation. During bone development, regulates osteoblast proliferation and differentiation thus determining bone mass. Mechanistically, the formation of the signaling complex between Wnt ligand, frizzled receptor and LRP5 coreceptor promotes the recruitment of AXIN1 to LRP5, stabilizing beta-catenin/CTNNB1 and activating TCF/LEF-mediated transcriptional programs. Acts as a coreceptor for non-Wnt proteins, such as norrin/NDP. Binding of norrin/NDP to frizzled 4/FZD4-LRP5 receptor complex triggers beta-catenin/CTNNB1-dependent signaling known to be required for retinal vascular development. Plays a role in controlling postnatal vascular regression in retina via macrophage-induced endothelial cell apoptosis. The sequence is that of Low-density lipoprotein receptor-related protein 5 from Homo sapiens (Human).